A 785-amino-acid polypeptide reads, in one-letter code: Cadherin-7 (785 aa).

The first 27 residues, 1 to 27 (MKLGKVELCHFLQLIALFLCFSGMSQA), serve as a signal peptide directing secretion. Residues 28-47 (ELPRSRSKPYFQSGRSRTKR) constitute a propeptide that is removed on maturation. Residues 28–607 (ELPRSRSKPY…AYVLPAGLST (580 aa)) lie on the Extracellular side of the membrane. 5 consecutive Cadherin domains span residues 49–153 (WVWN…EPKF), 154–262 (LDGP…PPRF), 263–377 (PRRS…PPVF), 378–482 (SSPL…APEF), and 482–599 (FAMD…AEAY). Asn449 and Asn530 each carry an N-linked (GlcNAc...) asparagine glycan. Residues 608-628 (GALIAILACVLTLLVLILLIV) form a helical membrane-spanning segment. The Cytoplasmic portion of the chain corresponds to 629 to 785 (TMRRRKKEPL…YGNGQESLYS (157 aa)).

Its subcellular location is the cell membrane. Its function is as follows. Cadherins are calcium-dependent cell adhesion proteins. They preferentially interact with themselves in a homophilic manner in connecting cells; cadherins may thus contribute to the sorting of heterogeneous cell types. The polypeptide is Cadherin-7 (Cdh7) (Mus musculus (Mouse)).